Here is a 125-residue protein sequence, read N- to C-terminus: Glycoprotein hormones alpha chain (125 aa).

Positions 1–30 (MVSAVTTMGCMKAAGVSLLLLYFLLNAADS) are cleaved as a signal peptide. 5 disulfide bridges follow: Cys41-Cys64, Cys44-Cys93, Cys61-Cys114, Cys65-Cys116, and Cys92-Cys119. Residues Asn85 and Asn110 are each glycosylated (N-linked (GlcNAc...) asparagine).

This sequence belongs to the glycoprotein hormones subunit alpha family. As to quaternary structure, heterodimer. Glycoprotein hormones are heterodimers composed of a common alpha chain described here and a unique beta chain which confers their biological specificity to the different hormones.

It localises to the secreted. In terms of biological role, shared alpha chain of heterodimeric glycoprotein hormones. These hormones bind specific receptors on target cells that in turn activate downstream signaling pathways. Involved in gametogenesis and steroidogenesis. This chain is Glycoprotein hormones alpha chain (cga), found in Fundulus heteroclitus (Killifish).